The chain runs to 445 residues: Glutamyl-tRNA(Gln) amidotransferase subunit D (445 aa).

In terms of domain architecture, Asparaginase/glutaminase spans 93–425 (SEIKIISTGG…EKIRSLMISN (333 aa)). Residues threonine 103, threonine 179, aspartate 180, and lysine 258 contribute to the active site.

The protein belongs to the asparaginase 1 family. GatD subfamily. As to quaternary structure, heterodimer of GatD and GatE.

The catalysed reaction is L-glutamyl-tRNA(Gln) + L-glutamine + ATP + H2O = L-glutaminyl-tRNA(Gln) + L-glutamate + ADP + phosphate + H(+). In terms of biological role, allows the formation of correctly charged Gln-tRNA(Gln) through the transamidation of misacylated Glu-tRNA(Gln) in organisms which lack glutaminyl-tRNA synthetase. The reaction takes place in the presence of glutamine and ATP through an activated gamma-phospho-Glu-tRNA(Gln). The GatDE system is specific for glutamate and does not act on aspartate. The chain is Glutamyl-tRNA(Gln) amidotransferase subunit D from Saccharolobus islandicus (strain M.16.27) (Sulfolobus islandicus).